The sequence spans 406 residues: LIM/homeobox protein Lhx2 (406 aa).

LIM zinc-binding domains lie at 53 to 105 (CAGC…CKED) and 115 to 168 (CARC…CRLH). Residues 250 to 270 (DAEHLDRDQPYPSSQKTKRMR) form a disordered region. The homeobox DNA-binding region spans 266-325 (TKRMRTSFKHHQLRTMKSYFAINHNPDAKDLKQLAQKTGLTKRVLQVWFQNARAKFRRNL). A Nuclear localization signal motif is present at residues 307 to 323 (KRVLQVWFQNARAKFRR). The span at 328-356 (QENTGVDKSTDAALQTGTPSGPASELSNA) shows a compositional bias: polar residues. Disordered regions lie at residues 328-374 (QENT…TSPT) and 387-406 (GNLEGHEPHSPSQTTLTNLF). Residues 357–374 (SLSPSSTPTTLTDLTSPT) show a composition bias toward low complexity. The span at 396-406 (SPSQTTLTNLF) shows a compositional bias: polar residues.

As to quaternary structure, interacts (via LIM domains) with CITED2. Interacts with POU4F2.

The protein localises to the nucleus. Acts as a transcriptional activator. Stimulates the promoter of the alpha-glycoprotein gene. Transcriptional regulatory protein involved in the control of cell differentiation in developing lymphoid and neural cell types. This Homo sapiens (Human) protein is LIM/homeobox protein Lhx2 (LHX2).